We begin with the raw amino-acid sequence, 100 residues long: Large ribosomal subunit protein uL23 (100 aa).

This sequence belongs to the universal ribosomal protein uL23 family. As to quaternary structure, part of the 50S ribosomal subunit. Contacts protein L29, and trigger factor when it is bound to the ribosome.

Its function is as follows. One of the early assembly proteins it binds 23S rRNA. One of the proteins that surrounds the polypeptide exit tunnel on the outside of the ribosome. Forms the main docking site for trigger factor binding to the ribosome. In Prochlorococcus marinus (strain MIT 9301), this protein is Large ribosomal subunit protein uL23.